The sequence spans 317 residues: Ventral anterior homeobox 1 (317 aa).

A disordered region spans residues 1-62 (MEVRYSQDSE…CEKSRASSGD (62 aa)). The segment covering 18-27 (GLKEGKEGKD) has biased composition (basic and acidic residues). Positions 92–151 (PKRTRTSFTAEQLYRLEMEFQRCQYVVGRERTELARQLNLSETQVKVWFQNRRTKQKKDQ) form a DNA-binding region, homeobox. The interval 203 to 248 (GPSLGITANGGSSSSSRSSAGSSGTAGGSPPLPTVTSSGTVTGLQG) is disordered. The span at 212-225 (GGSSSSSRSSAGSS) shows a compositional bias: low complexity. Residues 236 to 247 (TVTSSGTVTGLQ) are compositionally biased toward polar residues.

The protein belongs to the EMX homeobox family. In terms of tissue distribution, expressed in the anterior neural keel and later in the preoptic area and optic stalk.

The protein resides in the nucleus. Transcription factor that is required for closure of the choroid fissure and together with Vax2 is required for optic nerve differentiation and to limit retinal development to the optic cup. The chain is Ventral anterior homeobox 1 (vax1) from Danio rerio (Zebrafish).